Reading from the N-terminus, the 185-residue chain is uncharacterized protein (185 aa).

The next 4 membrane-spanning stretches (helical) occupy residues 5–25, 63–83, 97–117, and 149–169; these read SFLI…RIWL, LATV…LILI, FLGL…VLLI, and IIPA…GLQF.

It belongs to the YggT family.

The protein resides in the cell membrane. This is an uncharacterized protein from Vibrio alginolyticus.